The primary structure comprises 43 residues: Protein PsbN (43 aa).

Residues 7–27 traverse the membrane as a helical segment; it reads LIVFIASLLLGVTGYSVYTAF.

Belongs to the PsbN family.

It localises to the plastid. Its subcellular location is the chloroplast thylakoid membrane. Its function is as follows. May play a role in photosystem I and II biogenesis. The protein is Protein PsbN of Rhodomonas salina (Cryptomonas salina).